Consider the following 226-residue polypeptide: PKHD-type hydroxylase Abu_0724 (226 aa).

The Fe2OG dioxygenase domain occupies 78–178 (HIISPFFNKY…RMVSFMWIQS (101 aa)). His96, Asp98, and His159 together coordinate Fe cation. Residue Arg169 participates in 2-oxoglutarate binding.

Fe(2+) is required as a cofactor. It depends on L-ascorbate as a cofactor.

The sequence is that of PKHD-type hydroxylase Abu_0724 from Aliarcobacter butzleri (strain RM4018) (Arcobacter butzleri).